Here is a 233-residue protein sequence, read N- to C-terminus: MADS-box protein CMB1 (233 aa).

An MADS-box domain is found at 3-58; sequence RGRVELKRIENKINRQVTFAKRRNGLLKKAYELSVLCDAEVALIVFSNRGKLYEFC. One can recognise a K-box domain in the interval 87–177; sequence TESSYQEYLK…KTKLEESCAS (91 aa).

The protein localises to the nucleus. This Dianthus caryophyllus (Carnation) protein is MADS-box protein CMB1 (CMB1).